We begin with the raw amino-acid sequence, 112 residues long: Ig kappa chain V-II region MOPC 167 (112 aa).

Positions 1–23 are framework-1; sequence DIVITQDELSNPVTSGESVSISC. Cys-23 and Cys-93 form a disulfide bridge. Residues 24–39 are complementarity-determining-1; the sequence is RSSKSLLYKDGKTYLN. The interval 40–54 is framework-2; it reads WFLQRPGQSPQLLIS. Positions 55-61 are complementarity-determining-2; the sequence is LMSTRAS. A framework-3 region spans residues 62–93; the sequence is GVSDRFSGSGSRTDFTLEISRVKAEDVGVYYC. A complementarity-determining-3 region spans residues 94 to 102; it reads QQLVEYPLT. The interval 103–112 is framework-4; that stretch reads FGAGTKLELK.

This is Ig kappa chain V-II region MOPC 167 from Mus musculus (Mouse).